Here is a 248-residue protein sequence, read N- to C-terminus: MNQTNFGFKKVDYTKKQGLVNNVFSNVADKYDLMNDLMSLGLHRLWKDEFIRQIPNLNSHILDVASGSGDIALKLAKKARDRVNNISLTLSDINEEMLKQAKKKAIDLNLFQNLKFTVASAEELPFPDDSFDYYTIAFGIRNVPDINKALKEACRVLKPMGKFICLEFSKVKEGYIKDFYKFYSFNIIPSIGQMIAGNKEAYEYLVESIDLFPSQDEFRIMIKDAGFEEVGYKNLSGGIVAIHSAYTQ.

S-adenosyl-L-methionine-binding residues include serine 68 and aspartate 92.

The protein belongs to the class I-like SAM-binding methyltransferase superfamily. MenG/UbiE family.

The catalysed reaction is a 2-demethylmenaquinol + S-adenosyl-L-methionine = a menaquinol + S-adenosyl-L-homocysteine + H(+). The enzyme catalyses a 2-methoxy-6-(all-trans-polyprenyl)benzene-1,4-diol + S-adenosyl-L-methionine = a 5-methoxy-2-methyl-3-(all-trans-polyprenyl)benzene-1,4-diol + S-adenosyl-L-homocysteine + H(+). It participates in quinol/quinone metabolism; menaquinone biosynthesis; menaquinol from 1,4-dihydroxy-2-naphthoate: step 2/2. Its pathway is cofactor biosynthesis; ubiquinone biosynthesis. In terms of biological role, methyltransferase required for the conversion of demethylmenaquinol (DMKH2) to menaquinol (MKH2) and the conversion of 2-polyprenyl-6-methoxy-1,4-benzoquinol (DDMQH2) to 2-polyprenyl-3-methyl-6-methoxy-1,4-benzoquinol (DMQH2). This Rickettsia africae (strain ESF-5) protein is Ubiquinone/menaquinone biosynthesis C-methyltransferase UbiE.